The primary structure comprises 953 residues: E3 ubiquitin-protein ligase ZNF598 (953 aa).

Residues 25 to 39 (KPSKSTRIKPTKPHH) are compositionally biased toward basic residues. The segment at 25–47 (KPSKSTRIKPTKPHHTPSNSMES) is disordered. The RING-type zinc finger occupies 57–97 (CVLCCQDIDLFAVGKCDHPVCYRCSTKMRVLCEQKYCAVCR). The C2H2-type zinc finger occupies 215 to 238 (PLCKFCDDRYLDNDELLKHLRRDH). Disordered stretches follow at residues 299–779 (SKNR…EDSS) and 884–911 (EKQQ…SSLD). The segment covering 371–380 (AAAMRASMAS) has biased composition (low complexity). The segment covering 381–409 (HQEERSHAQERSMLKPRREEKLEPDETRN) has biased composition (basic and acidic residues). Composition is skewed to polar residues over residues 410–431 (NRST…NGSL) and 467–483 (LSGS…YTNQ). S489 carries the phosphoserine modification. 2 stretches are compositionally biased toward low complexity: residues 508–518 (QSSAASAWSQA) and 536–553 (MTPM…PLPS). Polar residues-rich tracts occupy residues 555–564 (SVPQPLTASS) and 641–650 (LGSPSHTPET). A compositionally biased stretch (basic and acidic residues) spans 655 to 666 (AHKENVPEKKPP). The span at 695-711 (SCTSFPENITSSKQPVT) shows a compositional bias: polar residues. Positions 747 to 765 (LPPPPPPGLGPAVSKPPPG) are enriched in pro residues. The span at 770–779 (PLNSNVEDSS) shows a compositional bias: polar residues.

This sequence belongs to the ZNF598/HEL2 family.

It localises to the cytoplasm. The protein localises to the cytosol. It carries out the reaction S-ubiquitinyl-[E2 ubiquitin-conjugating enzyme]-L-cysteine + [acceptor protein]-L-lysine = [E2 ubiquitin-conjugating enzyme]-L-cysteine + N(6)-ubiquitinyl-[acceptor protein]-L-lysine.. It participates in protein modification; protein ubiquitination. In terms of biological role, E3 ubiquitin-protein ligase that plays a key role in the ribosome quality control (RQC), a pathway that takes place when a ribosome has stalled during translation, leading to degradation of nascent peptide chains. ZNF598 is activated when ribosomes are stalled within an mRNA following translation of prematurely polyadenylated mRNAs. Acts as a ribosome collision sensor: specifically recognizes and binds collided di-ribosome, which arises when a trailing ribosome encounters a slower leading ribosome, leading to terminally arrest translation. Following binding to colliding ribosomes, mediates monoubiquitination of 40S ribosomal proteins RPS10/eS10 and RPS3/uS3, and 'Lys-63'-linked polyubiquitination of RPS20/uS10. Polyubiquitination of RPS20/uS10 promotes recruitment of the RQT (ribosome quality control trigger) complex, which drives the disassembly of stalled ribosomes, followed by degradation of nascent peptides. This Danio rerio (Zebrafish) protein is E3 ubiquitin-protein ligase ZNF598.